The following is a 200-amino-acid chain: Holliday junction branch migration complex subunit RuvA (200 aa).

The tract at residues 1-63 is domain I; sequence MIASVRGEVL…EDSMTLYGFP (63 aa). Residues 64-142 are domain II; that stretch reads DSESKELFGL…AVASTSGAVP (79 aa). Residues 142-146 are flexible linker; it reads PLGAG. Positions 147–200 are domain III; it reads GGGSVRDQIVEALVGLGFPAKQAEQAADSVLAEAPESTTSTALRSALSLLGKTR.

It belongs to the RuvA family. Homotetramer. Forms an RuvA(8)-RuvB(12)-Holliday junction (HJ) complex. HJ DNA is sandwiched between 2 RuvA tetramers; dsDNA enters through RuvA and exits via RuvB. An RuvB hexamer assembles on each DNA strand where it exits the tetramer. Each RuvB hexamer is contacted by two RuvA subunits (via domain III) on 2 adjacent RuvB subunits; this complex drives branch migration. In the full resolvosome a probable DNA-RuvA(4)-RuvB(12)-RuvC(2) complex forms which resolves the HJ.

The protein resides in the cytoplasm. Functionally, the RuvA-RuvB-RuvC complex processes Holliday junction (HJ) DNA during genetic recombination and DNA repair, while the RuvA-RuvB complex plays an important role in the rescue of blocked DNA replication forks via replication fork reversal (RFR). RuvA specifically binds to HJ cruciform DNA, conferring on it an open structure. The RuvB hexamer acts as an ATP-dependent pump, pulling dsDNA into and through the RuvAB complex. HJ branch migration allows RuvC to scan DNA until it finds its consensus sequence, where it cleaves and resolves the cruciform DNA. This Rhodococcus jostii (strain RHA1) protein is Holliday junction branch migration complex subunit RuvA.